A 156-amino-acid polypeptide reads, in one-letter code: Large ribosomal subunit protein uL15 (156 aa).

The tract at residues 14 to 35 (GSRTHGWGRVGQHRKSGSSGGK) is disordered.

It belongs to the universal ribosomal protein uL15 family. In terms of assembly, part of the 50S ribosomal subunit.

Binds to the 23S rRNA. The sequence is that of Large ribosomal subunit protein uL15 from Pyrobaculum islandicum (strain DSM 4184 / JCM 9189 / GEO3).